Consider the following 232-residue polypeptide: Protein lin-7 homolog A (232 aa).

Residues M14–D28 carry the Kinase interacting site motif. The L27 domain occupies L25–G80. Positions V108–P190 constitute a PDZ domain.

It belongs to the lin-7 family. In terms of assembly, forms a complex with CASK and CASKIN1. Component of the brain-specific heterotrimeric complex (LIN-10-LIN-2-LIN-7 complex) composed of at least APBA1, CASK, and LIN7, which associates with the motor protein KIF17 to transport vesicles along microtubules. Can also interact with other modular proteins containing protein-protein interaction domains like PALS1, PALS2, MPP7, DLG1, DLG2 and DLG3 through its L27 domain. Interacts with DLG4 and GRIN2B as well as CDH1 and CTNNB1, the channels KCNJ12/Kir2.2, KCNJ4/Kir2.3 and probably KCNJ2/Kir2.1 and SLC6A12/BGT-1 via its PDZ domain. The association of LIN7A with cadherin and beta-catenin is calcium-dependent, occurs at synaptic junctions and requires the actin cytoskeleton. Interacts with EGFR, ERBB2, ERBB3 and ERBB4 with both PDZ and KID domains. Associates with KIF17 via APBA1. Interacts with HTR4. Forms a tripartite complex composed of DLG1, MPP7 and LIN7 (LIN7A or LIN7C). Interacts with MARCHF11. As to expression, ubiquitously expressed in brain and detected in lung, liver and testis (at protein level). Expression was detected only in brain.

The protein resides in the cell membrane. It localises to the basolateral cell membrane. Its subcellular location is the cell junction. It is found in the postsynaptic density membrane. The protein localises to the tight junction. Plays a role in establishing and maintaining the asymmetric distribution of channels and receptors at the plasma membrane of polarized cells. Forms membrane-associated multiprotein complexes that may regulate delivery and recycling of proteins to the correct membrane domains. The tripartite complex composed of LIN7 (LIN7A, LIN7B or LIN7C), CASK and APBA1 associates with the motor protein KIF17 to transport vesicles containing N-methyl-D-aspartate (NMDA) receptor subunit NR2B along microtubules. This complex may have the potential to couple synaptic vesicle exocytosis to cell adhesion in brain. Ensures the proper localization of GRIN2B (subunit 2B of the NMDA receptor) to neuronal postsynaptic density and may function in localizing synaptic vesicles at synapses where it is recruited by beta-catenin and cadherin. Required to localize Kir2 channels, GABA transporter (SLC6A12) and EGFR/ERBB1, ERBB2, ERBB3 and ERBB4 to the basolateral membrane of epithelial cells. The sequence is that of Protein lin-7 homolog A (Lin7a) from Rattus norvegicus (Rat).